Consider the following 605-residue polypeptide: Elongation factor 4 (605 aa).

One can recognise a tr-type G domain in the interval 4–186 (SATRNFCIIA…AIVARVPAPK (183 aa)). GTP contacts are provided by residues 16–21 (DHGKST) and 133–136 (NKID).

The protein belongs to the TRAFAC class translation factor GTPase superfamily. Classic translation factor GTPase family. LepA subfamily.

It is found in the cell membrane. The enzyme catalyses GTP + H2O = GDP + phosphate + H(+). Its function is as follows. Required for accurate and efficient protein synthesis under certain stress conditions. May act as a fidelity factor of the translation reaction, by catalyzing a one-codon backward translocation of tRNAs on improperly translocated ribosomes. Back-translocation proceeds from a post-translocation (POST) complex to a pre-translocation (PRE) complex, thus giving elongation factor G a second chance to translocate the tRNAs correctly. Binds to ribosomes in a GTP-dependent manner. The protein is Elongation factor 4 of Dehalococcoides mccartyi (strain ATCC BAA-2266 / KCTC 15142 / 195) (Dehalococcoides ethenogenes (strain 195)).